Here is a 417-residue protein sequence, read N- to C-terminus: Imidazolonepropionase (417 aa).

Fe(3+) contacts are provided by H77 and H79. Zn(2+)-binding residues include H77 and H79. Residues R86, Y149, and H182 each contribute to the 4-imidazolone-5-propanoate site. Y149 serves as a coordination point for N-formimidoyl-L-glutamate. H244 serves as a coordination point for Fe(3+). H244 lines the Zn(2+) pocket. Position 247 (E247) interacts with 4-imidazolone-5-propanoate. D323 contributes to the Fe(3+) binding site. D323 contributes to the Zn(2+) binding site. N325 is an N-formimidoyl-L-glutamate binding site.

Belongs to the metallo-dependent hydrolases superfamily. HutI family. Requires Zn(2+) as cofactor. Fe(3+) is required as a cofactor.

It is found in the cytoplasm. The enzyme catalyses 4-imidazolone-5-propanoate + H2O = N-formimidoyl-L-glutamate. It participates in amino-acid degradation; L-histidine degradation into L-glutamate; N-formimidoyl-L-glutamate from L-histidine: step 3/3. Its function is as follows. Catalyzes the hydrolytic cleavage of the carbon-nitrogen bond in imidazolone-5-propanoate to yield N-formimidoyl-L-glutamate. It is the third step in the universal histidine degradation pathway. This chain is Imidazolonepropionase, found in Halobacterium salinarum (strain ATCC 29341 / DSM 671 / R1).